Here is a 444-residue protein sequence, read N- to C-terminus: Homogentisate 1,2-dioxygenase (444 aa).

Histidine 298 functions as the Proton acceptor in the catalytic mechanism. Fe cation-binding residues include histidine 341 and glutamate 347. Homogentisate contacts are provided by tyrosine 356 and histidine 377. Fe cation is bound at residue histidine 377.

This sequence belongs to the homogentisate dioxygenase family. Hexamer; dimer of trimers. The cofactor is Fe cation.

It carries out the reaction homogentisate + O2 = 4-maleylacetoacetate + H(+). Its pathway is amino-acid degradation; L-phenylalanine degradation; acetoacetate and fumarate from L-phenylalanine: step 4/6. Functionally, involved in the catabolism of homogentisate (2,5-dihydroxyphenylacetate or 2,5-OH-PhAc), a central intermediate in the degradation of phenylalanine and tyrosine. Catalyzes the oxidative ring cleavage of the aromatic ring of homogentisate to yield maleylacetoacetate. The sequence is that of Homogentisate 1,2-dioxygenase from Burkholderia ambifaria (strain ATCC BAA-244 / DSM 16087 / CCUG 44356 / LMG 19182 / AMMD) (Burkholderia cepacia (strain AMMD)).